Reading from the N-terminus, the 447-residue chain is N-succinylarginine dihydrolase (447 aa).

Substrate-binding positions include 19 to 28 (AGLSFGNEAS), N110, and 137 to 138 (HR). Residue E174 is part of the active site. Residue R213 participates in substrate binding. The active site involves H249. Substrate is bound by residues D251 and N364. The Nucleophile role is filled by C370.

This sequence belongs to the succinylarginine dihydrolase family. Homodimer.

It catalyses the reaction N(2)-succinyl-L-arginine + 2 H2O + 2 H(+) = N(2)-succinyl-L-ornithine + 2 NH4(+) + CO2. It participates in amino-acid degradation; L-arginine degradation via AST pathway; L-glutamate and succinate from L-arginine: step 2/5. Catalyzes the hydrolysis of N(2)-succinylarginine into N(2)-succinylornithine, ammonia and CO(2). In Yersinia pseudotuberculosis serotype O:1b (strain IP 31758), this protein is N-succinylarginine dihydrolase.